The chain runs to 581 residues: MAPAVLANLNEPLFLGQCGAVFMRKYTNQPLSGDINNPLFNPNPNPNSISAYGNNSSKHFDDSSAYGDYVSFDLDGYTSNQLRELKKRLNSELEEVRFLRERIESGTFVSGSVYTTQARSFAGETNDVGVKKTKTKKKKIGHGQKRSNPFATDEPSLKRHVALDLMSEKVLKSMMTTCGQILVKLMKHKWSWVFLNPVDVVGLGLHDYHRIVDKPMDLGTVKMNLEKGLYRSPIDFASDVRLTFTNAMSYNPKGQDVYLMAEKLLSQFDVWFNPTLKRFEAQEVKVMGSSSRPGPEDNQRVWNQNNVAENARKGPEQISIAKKLDSVKPLLPTLPPPPVIEITRDPSPPPSPVQPPPPPSPPPQPVNQVEASLEVRETNKGRKGKLPKPKAKDPNKREMTMDEKGKLGVNLQELPPEKLGQLIQILRKRTRDLPQDGDEIELDIEALDNETLWELDRFVTNYRKMASKIKRQGFIQNVSTPPRNMPPVTEMGSAEKRGRKGGEAGEEDVDIGEDIPVEDYPSVEIERDGTAAAASGGSSSSGSFSSSGSSSSSDSESGSSSGSDSDADSVQSPFVEAKEAP.

The disordered stretch occupies residues 130-153 (VKKTKTKKKKIGHGQKRSNPFATD). The span at 131–145 (KKTKTKKKKIGHGQK) shows a compositional bias: basic residues. The Bromo domain maps to 169 to 275 (KVLKSMMTTC…SQFDVWFNPT (107 aa)). 2 disordered regions span residues 329-399 (PLLP…KREM) and 470-581 (KRQG…KEAP). Positions 346-365 (PSPPPSPVQPPPPPSPPPQP) are enriched in pro residues. One can recognise an NET domain in the interval 389-470 (PKAKDPNKRE…NYRKMASKIK (82 aa)). Basic and acidic residues-rich tracts occupy residues 390-399 (KAKDPNKREM) and 493-503 (SAEKRGRKGGE). Positions 504–517 (AGEEDVDIGEDIPV) are enriched in acidic residues. A compositionally biased stretch (low complexity) spans 530–564 (TAAAASGGSSSSGSFSSSGSSSSSDSESGSSSGSD).

Its subcellular location is the nucleus. This is Transcription factor GTE2 (GTE2) from Arabidopsis thaliana (Mouse-ear cress).